The primary structure comprises 360 residues: MKTWVIKIGTSILRGTEETSTEEVIENLSRSFTSFLSKGNKLILVTSGAVGLGCQKLNIKTRPNDLSTLQATAAVGQVNLMSLYDKVFNRLGLNIAQILITKADFNSRESFNNASKTLKRLIDLNVIPIVNENDTVANEELKYGDNDTLSALVALAINANKLILLTDIENLYSKDPRNNKDAQPIKEVHNSELKEIKDKNIQNSNNEWGTGGISTKLISAEIATKGGVEVQLVDGTNKKNLIEIFNDNKIGTLFYPVEKPIGNKKSWLSHAIQTVGKITLDDGASFAIKKKGASLLAVGVKNVEGNFTINQAVKIVNTNDKEVAKGLVSISSDKLRSILNNKENNNSSIIVVHRDVLALS.

Position 7 (Lys-7) interacts with ATP. Substrate is bound by residues Ser-47, Asp-134, and Asn-146. Residues 166–167 (TD) and 210–216 (TGGISTK) contribute to the ATP site. In terms of domain architecture, PUA spans 275–356 (VGKITLDDGA…SSIIVVHRDV (82 aa)).

Belongs to the glutamate 5-kinase family.

Its subcellular location is the cytoplasm. It catalyses the reaction L-glutamate + ATP = L-glutamyl 5-phosphate + ADP. Its pathway is amino-acid biosynthesis; L-proline biosynthesis; L-glutamate 5-semialdehyde from L-glutamate: step 1/2. Catalyzes the transfer of a phosphate group to glutamate to form L-glutamate 5-phosphate. The polypeptide is Glutamate 5-kinase (Prochlorococcus marinus (strain AS9601)).